Reading from the N-terminus, the 578-residue chain is GPI-anchor transamidase component PIGT (578 aa).

The first 21 residues, 1–21 (MAAAMPLALLVLLLLGPGGWC), serve as a signal peptide directing secretion. At 22–525 (LAEPPRDSLR…NLPTPDFSMP (504 aa)) the chain is on the lumenal side. N-linked (GlcNAc...) asparagine glycosylation is present at asparagine 164. Disulfide bonds link cysteine 195–cysteine 272 and cysteine 226–cysteine 231. N-linked (GlcNAc...) asparagine glycans are attached at residues asparagine 291 and asparagine 327. A 2-acyl-6-[6-phosphoethanolamine-alpha-D-mannosyl-(1-&gt;2)-6-phosphoethanolamine-alpha-D-mannosyl-(1-&gt;6)-2-phosphoethanolamine-alpha-D-mannosyl-(1-&gt;4)-alpha-D-glucosaminyl]-1-(1-radyl,2-acyl-sn-glycero-3-phospho)-1D-myo-inositol-binding residues include asparagine 461, aspartate 521, serine 523, and asparagine 527. Residues 526-548 (YNVICLTCTVVAVCYGSFYNLLT) traverse the membrane as a helical segment. Over 549–578 (RTFHIEEPRTGGLAKRLANLIRRARGVPPL) the chain is Cytoplasmic.

Belongs to the PIGT family. Heteropentamer. Part of the GPI-anchor transamidase complex, consisting of PIGK, PIGT, PIGS, PIGU and GAA1. Post-translationally, the disulfide bond between PIGK/GPI8 and PIGT is important for normal enzyme activity.

It is found in the endoplasmic reticulum membrane. The protein operates within glycolipid biosynthesis; glycosylphosphatidylinositol-anchor biosynthesis. Functionally, component of the glycosylphosphatidylinositol-anchor (GPI-anchor) transamidase (GPI-T) complex that catalyzes the formation of the linkage between a proprotein and a GPI-anchor and participates in GPI anchored protein biosynthesis. May play a crucial role in GPI-T complex assembly in the luminal layer. Binds GPI-anchor. This chain is GPI-anchor transamidase component PIGT, found in Homo sapiens (Human).